We begin with the raw amino-acid sequence, 1235 residues long: Structural maintenance of chromosomes protein 1B (1235 aa).

32–39 (GPNGSGKS) contacts ATP. Positions 156 to 490 (EEISTSGELI…RSELQNAGID (335 aa)) form a coiled coil. One can recognise an SMC hinge domain in the interval 514 to 629 (SVFGRLFDLC…ETMEEARHIA (116 aa)). N6-acetyllysine is present on residues lysine 648 and lysine 713. 3 coiled-coil regions span residues 666 to 934 (WDEK…LDCK), 970 to 994 (EKEE…SDQE), and 1022 to 1049 (RALE…KEAR). At lysine 1033 the chain carries N6-acetyllysine.

The protein belongs to the SMC family. SMC1 subfamily. Forms a heterodimer with SMC3. Component of a meiosis-specific cohesin complex, probably composed of the SMC1B and SMC3 heterodimer attached via their SMC hinge domain, RAD21 (or its meiosis-specific related protein REC8), which link them, and STAG3, which interacts with RAD21 or REC8. The cohesin complex interacts with the cohesin loading complex subunits NIPBL/Scc2 (via HEAT repeats) and MAU2/Scc4. NIPBL directly contacts all members of the complex, RAD21, SMC1A/B, SMC3 and STAG1.

The protein localises to the nucleus. Its subcellular location is the chromosome. It is found in the centromere. In terms of biological role, meiosis-specific component of cohesin complex. Required for the maintenance of meiotic cohesion, but not, or only to a minor extent, for its establishment. Contributes to axial element (AE) formation and the organization of chromatin loops along the AE. Plays a key role in synapsis, recombination and chromosome movements. The cohesin complex is required for the cohesion of sister chromatids after DNA replication. The cohesin complex apparently forms a large proteinaceous ring within which sister chromatids can be trapped. At anaphase, the complex is cleaved and dissociates from chromatin, allowing sister chromatids to segregate. The meiosis-specific cohesin complex probably replaces mitosis specific cohesin complex when it dissociates from chromatin during prophase I. This chain is Structural maintenance of chromosomes protein 1B (SMC1B), found in Homo sapiens (Human).